Reading from the N-terminus, the 317-residue chain is N(5)-(carboxyethyl)ornithine synthase (317 aa).

The pyruvate site is built by Arg-15, Lys-71, and His-92. Residue 172 to 177 (GSGNVS) participates in NADP(+) binding.

The protein belongs to the AlaDH/PNT family. CEOS subfamily. Homotetramer.

The catalysed reaction is N(5)-[1(S)-1-carboxyethyl]-L-ornithine + NADP(+) + H2O = L-ornithine + pyruvate + NADPH + H(+). Functionally, catalyzes the NADPH-dependent reductive condensation between pyruvic acid and the side chain amino group of L-ornithine to form N(5)-(L-1-carboxyethyl)-L-ornithine. To a lesser extent, can also use L-lysine as substrate (yielding N(6)-(L-1-carboxyethyl)-L-lysine), and the D-isomers of the 2 basic amino acids. Can use alpha-keto acids other than pyruvate, e.g. glyoxylate. This chain is N(5)-(carboxyethyl)ornithine synthase (ceo), found in Clostridium botulinum (strain Hall / ATCC 3502 / NCTC 13319 / Type A).